The following is a 391-amino-acid chain: MESLKEMRKAQKSEGPAAILAIGTATPDNVYIQADYPDYYFKITKSEHMTELKDKFKTLCEKSMIRKRHMCFSQEFLKANPEVCKHMGKSLNARQDIAVVETPRIGKEAAVKAIKEWGHPKSSITHLIFCTSAGVDMPGADYQLTRMLGLNPSVKRMMIYQQGCYAGGTVLRLAKDLAENNKGSRVLVVCSELTAPTFRGPSPDAVDSLVGQALFADGAAALVVGADPDTSVERALYYIVSASQMLLPDSDGAIEGHIREEGLTVHLKKDVPALFSANIDTPLVEAFRPLGISDWNSIFWIAHPGGPAILDQIEVKLGLKEDKLRASKHVMSEYGNMSSSCVLFVLDEMRNKSLQDGKSTTGEGLDWGVLFGFGPGLTVETVVLRSVPVEA.

Residue Cys-164 is part of the active site.

This sequence belongs to the thiolase-like superfamily. Chalcone/stilbene synthases family. In terms of assembly, homodimer.

The catalysed reaction is N-methylanthraniloyl-CoA + 3 malonyl-CoA + 3 H(+) = 1,3-dihydroxy-N-methylacridone + 3 CO2 + 4 CoA + H2O. The sequence is that of Acridone synthase 2 (ACS2) from Ruta graveolens (Common rue).